A 528-amino-acid polypeptide reads, in one-letter code: Homoserine O-acetyltransferase (528 aa).

The region spanning 60-245 (LVICHALTGS…AALLTYRSRD (186 aa)) is the AB hydrolase-1 domain. Ser154 serves as the catalytic Nucleophile. Disordered regions lie at residues 250–335 (RFGR…VKTQ) and 388–413 (DLSA…DATE). Positions 273–282 (QETTDPSVPS) are enriched in polar residues. Basic and acidic residues predominate over residues 295–304 (AWREHNDGHR). The segment covering 389 to 409 (LSAPSRDTSLSSLSSGLPSSP) has biased composition (low complexity). Active-site residues include Asp438 and His467.

Belongs to the AB hydrolase superfamily. MetX family.

The protein localises to the cytoplasm. It catalyses the reaction L-homoserine + acetyl-CoA = O-acetyl-L-homoserine + CoA. It functions in the pathway amino-acid biosynthesis; L-methionine biosynthesis via de novo pathway; O-acetyl-L-homoserine from L-homoserine: step 1/1. With respect to regulation, inhibited by 6-carbamoyl-3a,4,5,9b-tetrahydro-3H-cyclopenta[ c]quinoline-4-carboxylic acid (CTCQC). Its function is as follows. Commits homoserine to the methionine biosynthesis pathway by catalyzing its O-acetylation. This is Homoserine O-acetyltransferase from Cryptococcus neoformans var. grubii serotype A (strain H99 / ATCC 208821 / CBS 10515 / FGSC 9487) (Filobasidiella neoformans var. grubii).